Consider the following 723-residue polypeptide: Catalase-peroxidase (723 aa).

Residues 96-225 constitute a cross-link (tryptophyl-tyrosyl-methioninium (Trp-Tyr) (with M-251)); it reads WHAAGSYRVA…LAAVMMGLIY (130 aa). His-97 acts as the Proton acceptor in catalysis. The segment at residues 225 to 251 is a cross-link (tryptophyl-tyrosyl-methioninium (Tyr-Met) (with W-96)); that stretch reads YVNPEGVDGNPDPLKTAEDVRVTFARM. Residue His-266 coordinates heme b.

Belongs to the peroxidase family. Peroxidase/catalase subfamily. Homodimer or homotetramer. Requires heme b as cofactor. Post-translationally, formation of the three residue Trp-Tyr-Met cross-link is important for the catalase, but not the peroxidase activity of the enzyme.

The enzyme catalyses H2O2 + AH2 = A + 2 H2O. The catalysed reaction is 2 H2O2 = O2 + 2 H2O. In terms of biological role, bifunctional enzyme with both catalase and broad-spectrum peroxidase activity. The polypeptide is Catalase-peroxidase (Alkalilimnicola ehrlichii (strain ATCC BAA-1101 / DSM 17681 / MLHE-1)).